The sequence spans 358 residues: Phospho-N-acetylmuramoyl-pentapeptide-transferase (358 aa).

10 helical membrane-spanning segments follow: residues 27–47 (IYAM…VIRV), 73–93 (TMGG…WADL), 97–117 (YIWT…VDDY), 134–154 (MFWQ…KPGF), 170–190 (LWFW…NAVN), 197–217 (GLAI…SYVA), 233–253 (GAGE…GFLW), 261–281 (VFMG…IAVI), 286–306 (ILLV…IFQV), and 335–355 (KIIV…ISTL).

This sequence belongs to the glycosyltransferase 4 family. MraY subfamily. Requires Mg(2+) as cofactor.

It is found in the cell inner membrane. It carries out the reaction UDP-N-acetyl-alpha-D-muramoyl-L-alanyl-gamma-D-glutamyl-meso-2,6-diaminopimeloyl-D-alanyl-D-alanine + di-trans,octa-cis-undecaprenyl phosphate = di-trans,octa-cis-undecaprenyl diphospho-N-acetyl-alpha-D-muramoyl-L-alanyl-D-glutamyl-meso-2,6-diaminopimeloyl-D-alanyl-D-alanine + UMP. Its pathway is cell wall biogenesis; peptidoglycan biosynthesis. Functionally, catalyzes the initial step of the lipid cycle reactions in the biosynthesis of the cell wall peptidoglycan: transfers peptidoglycan precursor phospho-MurNAc-pentapeptide from UDP-MurNAc-pentapeptide onto the lipid carrier undecaprenyl phosphate, yielding undecaprenyl-pyrophosphoryl-MurNAc-pentapeptide, known as lipid I. This chain is Phospho-N-acetylmuramoyl-pentapeptide-transferase, found in Pelobacter propionicus (strain DSM 2379 / NBRC 103807 / OttBd1).